The primary structure comprises 407 residues: S-adenosylmethionine synthase (407 aa).

An ATP-binding site is contributed by His-19. Asp-21 contacts Mg(2+). A K(+)-binding site is contributed by Glu-47. The L-methionine site is built by Glu-60 and Gln-103. Residues 103 to 113 form a flexible loop region; sequence QSQEIADGVDT. Residues 108–131 form a disordered region; the sequence is ADGVDTSQEARGDGHFEEDDRAGA. Residues 178–180, Asp-258, 264–265, Ala-281, and Lys-285 each bind ATP; these read DGK and RK. Asp-258 lines the L-methionine pocket. Lys-289 contacts L-methionine.

This sequence belongs to the AdoMet synthase family. Homotetramer; dimer of dimers. The cofactor is Mg(2+). K(+) serves as cofactor.

Its subcellular location is the cytoplasm. It catalyses the reaction L-methionine + ATP + H2O = S-adenosyl-L-methionine + phosphate + diphosphate. It functions in the pathway amino-acid biosynthesis; S-adenosyl-L-methionine biosynthesis; S-adenosyl-L-methionine from L-methionine: step 1/1. Functionally, catalyzes the formation of S-adenosylmethionine (AdoMet) from methionine and ATP. The overall synthetic reaction is composed of two sequential steps, AdoMet formation and the subsequent tripolyphosphate hydrolysis which occurs prior to release of AdoMet from the enzyme. The sequence is that of S-adenosylmethionine synthase from Corynebacterium efficiens (strain DSM 44549 / YS-314 / AJ 12310 / JCM 11189 / NBRC 100395).